Here is a 726-residue protein sequence, read N- to C-terminus: Sensory/regulatory protein RpfC (726 aa).

Topologically, residues 1–22 (MKSPLPWLKRRLSGRADSEHAQ) are periplasmic. The tract at residues 1-22 (MKSPLPWLKRRLSGRADSEHAQ) is sensor. Residues 23–40 (NLIRIIITTLFISYLGWR) traverse the membrane as a helical segment. The Cytoplasmic portion of the chain corresponds to 41 to 51 (YQHTHGDTLMA). A helical membrane pass occupies residues 52–72 (TWLILVGELLVSLGLMVAILL). The Periplasmic portion of the chain corresponds to 73–94 (RPQVSHTRRLIGMLLDYTCTGA). Residues 95 to 115 (IMAIQGEPASPLYAVCMWVTI) form a helical membrane-spanning segment. The Cytoplasmic portion of the chain corresponds to 116-127 (GNGLRYGSNYLR). The chain crosses the membrane as a helical span at residues 128–148 (AATAMGSLCFLGAILISPYWK). Over 149-151 (ANP) the chain is Periplasmic. The helical transmembrane segment at 152-172 (YLSWGLLLGLIAVPLYFDSLL) threads the bilayer. Residues 173–726 (RAMTRAVREA…DGECSPRSNE (554 aa)) are Cytoplasmic-facing. Positions 195–417 (NMSHEFRTPL…VFWFELPMAI (223 aa)) constitute a Histidine kinase domain. At His-198 the chain carries Phosphohistidine; by autocatalysis. A Response regulatory domain is found at 463–581 (RMLVADDHEA…KLLDTLADLA (119 aa)). Asp-512 bears the 4-aspartylphosphate mark. One can recognise an HPt domain in the interval 618-711 (GEEFERQFVR…KAGKDALDAR (94 aa)). A Phosphohistidine modification is found at His-657.

At low DSF concentrations, interacts with RpfF. Autophosphorylated. Activation may require a sequential transfer of a phosphate group from a His in the primary transmitter domain, to an Asp in the receiver domain and to a His in the secondary transmitter domain.

The protein localises to the cell inner membrane. The enzyme catalyses ATP + protein L-histidine = ADP + protein N-phospho-L-histidine.. Its activity is regulated as follows. Binding of DSF to the sensor region causes allosteric change, which facilitates RpfC autophosphorylation. Functionally, hybrid sensor kinase that regulates diverse biological functions through two distinct molecular mechanisms. At low cell density, the extracellular concentration of the diffusible signaling factor (DSF) is below a threshold, and unphosphorylated RpfC is involved in the negative regulation of DSF synthesis, via direct interaction with the DSF synthase RpfF. Interaction prevents synthesis of DSF, which remains at a basal level. This activity does not involve the phosphorelay mechanism and is not dependent on RpfG. Is also member of the two-component regulatory system RpfG/RpfC, which is involved in the perception and response to DSF, which is essential for cell-cell signaling. At high cell density, the level of extracellular DSF increases and binding of DSF to the sensor region of RpfC causes autophosphorylation of RpfC, which results in the release of RpfF and the activation of RpfG via a four-step phosphorelay. Activation of RpfG leads to the positive regulation of biofilm dispersal and the production of virulence factors. This chain is Sensory/regulatory protein RpfC (rpfC), found in Xanthomonas campestris pv. campestris (strain 8004).